We begin with the raw amino-acid sequence, 322 residues long: Cytochrome c biogenesis protein CcsA (322 aa).

6 helical membrane passes run 9 to 29 (ILTH…LITL), 44 to 64 (GMIV…ASSG), 143 to 163 (MLLS…ILII), 226 to 246 (VISL…VWAN), 259 to 276 (ETWA…LHSR), and 289 to 309 (IASI…LLGI).

It belongs to the CcmF/CycK/Ccl1/NrfE/CcsA family. As to quaternary structure, may interact with Ccs1.

It is found in the plastid. The protein resides in the chloroplast thylakoid membrane. Its function is as follows. Required during biogenesis of c-type cytochromes (cytochrome c6 and cytochrome f) at the step of heme attachment. This Triticum aestivum (Wheat) protein is Cytochrome c biogenesis protein CcsA.